The primary structure comprises 382 residues: Porphobilinogen deaminase, chloroplastic (382 aa).

The N-terminal 62 residues, 1–62, are a transit peptide targeting the chloroplast; it reads MDIASSSLSQ…KQSSSGFVKA (62 aa). The dipyrromethane site is built by arginine 80 and serine 82. Serine 123 carries the phosphoserine modification. Residues 156–157, 200–206, and 223–229 each bind dipyrromethane; these read KD, TASLRRK, and RGNVQTR. The active-site Proton donor/acceptor is aspartate 157. Cysteine 316 bears the S-(dipyrrolylmethanemethyl)cysteine mark.

The protein belongs to the HMBS family. In terms of assembly, monomer. It depends on dipyrromethane as a cofactor.

It localises to the plastid. It is found in the chloroplast. It carries out the reaction 4 porphobilinogen + H2O = hydroxymethylbilane + 4 NH4(+). The protein operates within porphyrin-containing compound metabolism; protoporphyrin-IX biosynthesis; coproporphyrinogen-III from 5-aminolevulinate: step 2/4. It functions in the pathway porphyrin-containing compound metabolism; chlorophyll biosynthesis. Its activity is regulated as follows. Inhibited by NH(3), heavy-metal ions, hydroxylamine and 2-bromoporphobilinogen. Not inhibited by N-ethylmaleimide. Tetrapolymerization of the monopyrrole PBG into the hydroxymethylbilane pre-uroporphyrinogen in several discrete steps. The polypeptide is Porphobilinogen deaminase, chloroplastic (HEMC) (Arabidopsis thaliana (Mouse-ear cress)).